The sequence spans 107 residues: Ribonuclease P protein component 4 (107 aa).

Positions 66, 69, 92, and 95 each coordinate Zn(2+).

Belongs to the eukaryotic/archaeal RNase P protein component 4 family. Consists of a catalytic RNA component and at least 4-5 protein subunits. Zn(2+) serves as cofactor.

The protein resides in the cytoplasm. The enzyme catalyses Endonucleolytic cleavage of RNA, removing 5'-extranucleotides from tRNA precursor.. Functionally, part of ribonuclease P, a protein complex that generates mature tRNA molecules by cleaving their 5'-ends. In Methanosarcina mazei (strain ATCC BAA-159 / DSM 3647 / Goe1 / Go1 / JCM 11833 / OCM 88) (Methanosarcina frisia), this protein is Ribonuclease P protein component 4.